The primary structure comprises 558 residues: Magnesium-chelatase 60 kDa subunit (558 aa).

Disordered regions lie at residues 234–268 (MPAS…GEEM) and 298–325 (MARG…MGRL). Over residues 240 to 254 (APPEPEPEPPEDQPD) the composition is skewed to acidic residues. Residues 298-308 (MARGATGTGSA) show a composition bias toward low complexity. In terms of domain architecture, VWFA spans 376 to 555 (VLIFAVDASG…HKLSNVLGAA (180 aa)).

This sequence belongs to the Mg-chelatase subunits D/I family.

The enzyme catalyses protoporphyrin IX + Mg(2+) + ATP + H2O = Mg-protoporphyrin IX + ADP + phosphate + 3 H(+). It participates in porphyrin-containing compound metabolism; bacteriochlorophyll biosynthesis. Its function is as follows. Involved in bacteriochlorophyll biosynthesis; introduces a magnesium ion into protoporphyrin IX to yield Mg-protoporphyrin IX. The chain is Magnesium-chelatase 60 kDa subunit (bchD) from Cereibacter sphaeroides (strain ATCC 17023 / DSM 158 / JCM 6121 / CCUG 31486 / LMG 2827 / NBRC 12203 / NCIMB 8253 / ATH 2.4.1.) (Rhodobacter sphaeroides).